The sequence spans 184 residues: Photosystem I assembly protein Ycf4 (184 aa).

Helical transmembrane passes span 22 to 42 (FCWAIILFLGSLGFLLVGTSS) and 57 to 77 (IVFFPQGIVMSFYGIAGLFIS).

The protein belongs to the Ycf4 family.

It localises to the plastid. It is found in the chloroplast thylakoid membrane. Functionally, seems to be required for the assembly of the photosystem I complex. In Helianthus annuus (Common sunflower), this protein is Photosystem I assembly protein Ycf4.